Consider the following 164-residue polypeptide: Cyclic pyranopterin monophosphate synthase (164 aa).

Substrate contacts are provided by residues 75–77 (MCH) and 116–117 (ME). Residue Asp-131 is part of the active site.

It belongs to the MoaC family. Homohexamer; trimer of dimers.

It catalyses the reaction (8S)-3',8-cyclo-7,8-dihydroguanosine 5'-triphosphate = cyclic pyranopterin phosphate + diphosphate. It functions in the pathway cofactor biosynthesis; molybdopterin biosynthesis. Catalyzes the conversion of (8S)-3',8-cyclo-7,8-dihydroguanosine 5'-triphosphate to cyclic pyranopterin monophosphate (cPMP). The polypeptide is Cyclic pyranopterin monophosphate synthase (Staphylococcus aureus (strain MSSA476)).